The sequence spans 439 residues: Serine/threonine-protein kinase 2 (439 aa).

The Protein kinase domain maps to 87 to 439; it reads NDDFYHISTG…IFSDWINGGN (353 aa). ATP-binding positions include 93–101 and lysine 117; that span reads ISTGGYGIV. Aspartate 307 acts as the Proton acceptor in catalysis.

This sequence belongs to the protein kinase superfamily. Ser/Thr protein kinase family. Phosphorylated in vivo. Autophosphorylated in vitro.

Its subcellular location is the host endoplasmic reticulum. The protein resides in the host endoplasmic reticulum-Golgi intermediate compartment. The catalysed reaction is L-seryl-[protein] + ATP = O-phospho-L-seryl-[protein] + ADP + H(+). It carries out the reaction L-threonyl-[protein] + ATP = O-phospho-L-threonyl-[protein] + ADP + H(+). Essential serine-protein kinase involved in the early stage of virion morphogenesis. The polypeptide is Serine/threonine-protein kinase 2 (OPG054) (Vaccinia virus (strain Tian Tan) (VACV)).